A 271-amino-acid chain; its full sequence is Acetyl-coenzyme A carboxylase carboxyl transferase subunit alpha (271 aa).

Positions 1–247 (MSRELIRTAD…KKTILEALGE (247 aa)) constitute a CoA carboxyltransferase C-terminal domain.

This sequence belongs to the AccA family. As to quaternary structure, acetyl-CoA carboxylase is a heterohexamer composed of biotin carboxyl carrier protein (AccB), biotin carboxylase (AccC) and two subunits each of ACCase subunit alpha (AccA) and ACCase subunit beta (AccD).

It is found in the cytoplasm. It catalyses the reaction N(6)-carboxybiotinyl-L-lysyl-[protein] + acetyl-CoA = N(6)-biotinyl-L-lysyl-[protein] + malonyl-CoA. It participates in lipid metabolism; malonyl-CoA biosynthesis; malonyl-CoA from acetyl-CoA: step 1/1. In terms of biological role, component of the acetyl coenzyme A carboxylase (ACC) complex. First, biotin carboxylase catalyzes the carboxylation of biotin on its carrier protein (BCCP) and then the CO(2) group is transferred by the carboxyltransferase to acetyl-CoA to form malonyl-CoA. The polypeptide is Acetyl-coenzyme A carboxylase carboxyl transferase subunit alpha (Clostridium perfringens (strain ATCC 13124 / DSM 756 / JCM 1290 / NCIMB 6125 / NCTC 8237 / Type A)).